Reading from the N-terminus, the 200-residue chain is MDLKTVTGAAVELSDTAFGREFNEALVHQVVTAYLAGARQGTRAQKTRAEVSGGGIKPWRQKGTGRARAGSIRSPIWRGGGRAFAAKPQDWSQKVNRKMYRGAMQCILAELIRQERLILVEEISVSGPKTKELIAKLGELNASRALIVTKEVDENLYLAARNIPHVNVLDTSEVDPVSLIAFDKVIMTVEAAKQFEEALA.

Residues 45-64 form a disordered region; it reads QKTRAEVSGGGIKPWRQKGT.

This sequence belongs to the universal ribosomal protein uL4 family. Part of the 50S ribosomal subunit.

Functionally, one of the primary rRNA binding proteins, this protein initially binds near the 5'-end of the 23S rRNA. It is important during the early stages of 50S assembly. It makes multiple contacts with different domains of the 23S rRNA in the assembled 50S subunit and ribosome. Its function is as follows. Forms part of the polypeptide exit tunnel. The polypeptide is Large ribosomal subunit protein uL4 (Psychrobacter cryohalolentis (strain ATCC BAA-1226 / DSM 17306 / VKM B-2378 / K5)).